We begin with the raw amino-acid sequence, 310 residues long: GMP synthase [glutamine-hydrolyzing] subunit B (310 aa).

Positions 2–185 constitute a GMPS ATP-PPase domain; the sequence is FDPKKFIDEA…LGLPDSIVYR (184 aa). Residue 29-35 coordinates ATP; that stretch reads SGGVDSS.

As to quaternary structure, heterodimer composed of a glutamine amidotransferase subunit (A) and a GMP-binding subunit (B).

It carries out the reaction XMP + L-glutamine + ATP + H2O = GMP + L-glutamate + AMP + diphosphate + 2 H(+). The protein operates within purine metabolism; GMP biosynthesis; GMP from XMP (L-Gln route): step 1/1. Catalyzes the synthesis of GMP from XMP. This is GMP synthase [glutamine-hydrolyzing] subunit B (guaAB) from Methanocaldococcus jannaschii (strain ATCC 43067 / DSM 2661 / JAL-1 / JCM 10045 / NBRC 100440) (Methanococcus jannaschii).